A 610-amino-acid chain; its full sequence is Methionine--tRNA ligase (610 aa).

A 'HIGH' region motif is present at residues 12-22 (PYANGPRHIGH). Residues cysteine 144, cysteine 147, cysteine 157, and cysteine 160 each coordinate Zn(2+). The 'KMSKS' region signature appears at 348–352 (KFSSS). Serine 351 provides a ligand contact to ATP.

This sequence belongs to the class-I aminoacyl-tRNA synthetase family. MetG type 1 subfamily. In terms of assembly, monomer. Zn(2+) serves as cofactor.

Its subcellular location is the cytoplasm. The catalysed reaction is tRNA(Met) + L-methionine + ATP = L-methionyl-tRNA(Met) + AMP + diphosphate. Functionally, is required not only for elongation of protein synthesis but also for the initiation of all mRNA translation through initiator tRNA(fMet) aminoacylation. The polypeptide is Methionine--tRNA ligase (Corynebacterium glutamicum (strain R)).